We begin with the raw amino-acid sequence, 378 residues long: Ribosomal RNA large subunit methyltransferase G (378 aa).

It belongs to the methyltransferase superfamily. RlmG family.

It is found in the cytoplasm. It catalyses the reaction guanosine(1835) in 23S rRNA + S-adenosyl-L-methionine = N(2)-methylguanosine(1835) in 23S rRNA + S-adenosyl-L-homocysteine + H(+). Functionally, specifically methylates the guanine in position 1835 (m2G1835) of 23S rRNA. This chain is Ribosomal RNA large subunit methyltransferase G, found in Salmonella dublin (strain CT_02021853).